The sequence spans 827 residues: Protein Jade-1 (827 aa).

The tract at residues M1–H35 is disordered. A compositionally biased stretch (polar residues) spans N16–L30. The PHD-type 1 zinc-finger motif lies at D200–G250. The segment at Q252–V286 adopts a C2HC pre-PHD-type zinc-finger fold. The segment at L310–G366 adopts a PHD-type 2 zinc-finger fold. Disordered regions lie at residues T622–L705 and R769–S810. Composition is skewed to basic and acidic residues over residues S646–L661 and K669–R682. Residues A692 to L705 show a composition bias toward polar residues.

The protein belongs to the JADE family. Component of the HBO1 complex composed.

The protein resides in the nucleus. It is found in the chromosome. Its subcellular location is the cytoplasm. It localises to the cytoskeleton. The protein localises to the cilium basal body. In terms of biological role, scaffold subunit of some HBO1 complexes, which have a histone H4 acetyltransferase activity. Plays a key role in HBO1 complex by directing KAT7/HBO1 specificity towards histone H4 acetylation (H4K5ac, H4K8ac and H4K12ac), regulating DNA replication initiation, regulating DNA replication initiation. This is Protein Jade-1 (jade1) from Xenopus laevis (African clawed frog).